A 331-amino-acid polypeptide reads, in one-letter code: Adenosine deaminase (331 aa).

Zn(2+) contacts are provided by His12 and His14. 3 residues coordinate substrate: His14, Asp16, and Gly170. His197 is a binding site for Zn(2+). Catalysis depends on Glu200, which acts as the Proton donor. Asp278 provides a ligand contact to Zn(2+). Substrate is bound at residue Asp279.

This sequence belongs to the metallo-dependent hydrolases superfamily. Adenosine and AMP deaminases family. Adenosine deaminase subfamily. Zn(2+) serves as cofactor.

It catalyses the reaction adenosine + H2O + H(+) = inosine + NH4(+). The enzyme catalyses 2'-deoxyadenosine + H2O + H(+) = 2'-deoxyinosine + NH4(+). Catalyzes the hydrolytic deamination of adenosine and 2-deoxyadenosine. This chain is Adenosine deaminase, found in Shewanella loihica (strain ATCC BAA-1088 / PV-4).